We begin with the raw amino-acid sequence, 119 residues long: Toxin ICK-8 (119 aa).

The first 19 residues, 1–19, serve as a signal peptide directing secretion; it reads MMKLYSLVIIATLAAAAFA. 4 disulfides stabilise this stretch: C59-C74, C67-C80, C71-C116, and C73-C87.

Belongs to the neurotoxin 25 family. ICK-8 subfamily. In terms of tissue distribution, expressed by the venom gland.

The protein localises to the secreted. In terms of biological role, ion channel inhibitor. In Trittame loki (Brush-footed trapdoor spider), this protein is Toxin ICK-8.